We begin with the raw amino-acid sequence, 179 residues long: Lebocin-4 (179 aa).

The first 16 residues, 1–16 (MYKFLVFSSVLVLFFA), serve as a signal peptide directing secretion. Positions 17–120 (QASCQRFIQP…RPIESHRNTR (104 aa)) are excised as a propeptide. O-linked (GalNAc...) threonine glycosylation is present at T135. The propeptide occupies 153 to 179 (RRHASDDQEELRHHNEHFLIPRDILQD).

It belongs to the lebocin family. In terms of processing, O-glycosylation is important for the antibacterial activity of lebocin. In terms of tissue distribution, hemolymph. Produced in fat body.

It is found in the secreted. Functionally, antibacterial peptide. The polypeptide is Lebocin-4 (LEB4) (Bombyx mori (Silk moth)).